The chain runs to 461 residues: tRNA modification GTPase MnmE (461 aa).

3 residues coordinate (6S)-5-formyl-5,6,7,8-tetrahydrofolate: Arg-27, Glu-89, and Arg-128. One can recognise a TrmE-type G domain in the interval 224 to 382 (GLKTAIVGRP…LEALIKKLFF (159 aa)). Asn-234 provides a ligand contact to K(+). Residues 234–239 (NVGKSS), 253–259 (TDVAGTT), and 278–281 (DTAG) each bind GTP. A Mg(2+)-binding site is contributed by Ser-238. Positions 253, 255, and 258 each coordinate K(+). Thr-259 is a binding site for Mg(2+). Lys-461 lines the (6S)-5-formyl-5,6,7,8-tetrahydrofolate pocket.

Belongs to the TRAFAC class TrmE-Era-EngA-EngB-Septin-like GTPase superfamily. TrmE GTPase family. In terms of assembly, homodimer. Heterotetramer of two MnmE and two MnmG subunits. K(+) is required as a cofactor.

It is found in the cytoplasm. In terms of biological role, exhibits a very high intrinsic GTPase hydrolysis rate. Involved in the addition of a carboxymethylaminomethyl (cmnm) group at the wobble position (U34) of certain tRNAs, forming tRNA-cmnm(5)s(2)U34. In Lactobacillus delbrueckii subsp. bulgaricus (strain ATCC BAA-365 / Lb-18), this protein is tRNA modification GTPase MnmE.